The sequence spans 349 residues: tRNA pseudouridine synthase D (349 aa).

A substrate-binding site is contributed by phenylalanine 27. Residue aspartate 80 is the Nucleophile of the active site. Asparagine 129 is a binding site for substrate. In terms of domain architecture, TRUD spans 155–303 (GVPNYFGAQR…VEAARRAMLL (149 aa)). Substrate is bound at residue phenylalanine 329.

Belongs to the pseudouridine synthase TruD family.

The catalysed reaction is uridine(13) in tRNA = pseudouridine(13) in tRNA. Responsible for synthesis of pseudouridine from uracil-13 in transfer RNAs. The protein is tRNA pseudouridine synthase D of Shigella flexneri.